The primary structure comprises 285 residues: Putative pyruvate, phosphate dikinase regulatory protein (285 aa).

165–172 lines the ADP pocket; sequence GVSRTSKT.

The protein belongs to the pyruvate, phosphate/water dikinase regulatory protein family. PDRP subfamily.

It carries out the reaction N(tele)-phospho-L-histidyl/L-threonyl-[pyruvate, phosphate dikinase] + ADP = N(tele)-phospho-L-histidyl/O-phospho-L-threonyl-[pyruvate, phosphate dikinase] + AMP + H(+). It catalyses the reaction N(tele)-phospho-L-histidyl/O-phospho-L-threonyl-[pyruvate, phosphate dikinase] + phosphate + H(+) = N(tele)-phospho-L-histidyl/L-threonyl-[pyruvate, phosphate dikinase] + diphosphate. Functionally, bifunctional serine/threonine kinase and phosphorylase involved in the regulation of the pyruvate, phosphate dikinase (PPDK) by catalyzing its phosphorylation/dephosphorylation. The polypeptide is Putative pyruvate, phosphate dikinase regulatory protein (Lactobacillus delbrueckii subsp. bulgaricus (strain ATCC 11842 / DSM 20081 / BCRC 10696 / JCM 1002 / NBRC 13953 / NCIMB 11778 / NCTC 12712 / WDCM 00102 / Lb 14)).